The following is a 504-amino-acid chain: Cytochrome P450 6a9 (504 aa).

Cysteine 449 provides a ligand contact to heme.

It belongs to the cytochrome P450 family. Heme serves as cofactor.

Its subcellular location is the endoplasmic reticulum membrane. The protein localises to the microsome membrane. Its function is as follows. Involved in the metabolism of insect hormones and in the breakdown of synthetic insecticides. The protein is Cytochrome P450 6a9 (Cyp6a9) of Drosophila melanogaster (Fruit fly).